The chain runs to 250 residues: DNA repair protein RecO (250 aa).

The protein belongs to the RecO family.

Functionally, involved in DNA repair and RecF pathway recombination. This is DNA repair protein RecO from Lactobacillus acidophilus (strain ATCC 700396 / NCK56 / N2 / NCFM).